Reading from the N-terminus, the 214-residue chain is Leucyl/phenylalanyl-tRNA--protein transferase (214 aa).

The segment at 194 to 214 (FAPPGYSPDPASVVQRSSQTS) is disordered.

Belongs to the L/F-transferase family.

The protein resides in the cytoplasm. It carries out the reaction N-terminal L-lysyl-[protein] + L-leucyl-tRNA(Leu) = N-terminal L-leucyl-L-lysyl-[protein] + tRNA(Leu) + H(+). The enzyme catalyses N-terminal L-arginyl-[protein] + L-leucyl-tRNA(Leu) = N-terminal L-leucyl-L-arginyl-[protein] + tRNA(Leu) + H(+). The catalysed reaction is L-phenylalanyl-tRNA(Phe) + an N-terminal L-alpha-aminoacyl-[protein] = an N-terminal L-phenylalanyl-L-alpha-aminoacyl-[protein] + tRNA(Phe). Its function is as follows. Functions in the N-end rule pathway of protein degradation where it conjugates Leu, Phe and, less efficiently, Met from aminoacyl-tRNAs to the N-termini of proteins containing an N-terminal arginine or lysine. The sequence is that of Leucyl/phenylalanyl-tRNA--protein transferase from Cereibacter sphaeroides (strain ATCC 17025 / ATH 2.4.3) (Rhodobacter sphaeroides).